The chain runs to 214 residues: Small ribosomal subunit protein uS3 (214 aa).

The KH type-2 domain maps to 39–107 (IRAYLLKKPA…EVWVAVEEVK (69 aa)).

The protein belongs to the universal ribosomal protein uS3 family. Part of the 30S ribosomal subunit. Forms a tight complex with proteins S10 and S14.

In terms of biological role, binds the lower part of the 30S subunit head. Binds mRNA in the 70S ribosome, positioning it for translation. This is Small ribosomal subunit protein uS3 from Protochlamydia amoebophila (strain UWE25).